The chain runs to 207 residues: Outer-membrane lipoprotein LolB (207 aa).

Positions Met1 to Ala21 are cleaved as a signal peptide. Cys22 carries N-palmitoyl cysteine lipidation. Cys22 is lipidated: S-diacylglycerol cysteine.

The protein belongs to the LolB family. Monomer.

The protein resides in the cell outer membrane. In terms of biological role, plays a critical role in the incorporation of lipoproteins in the outer membrane after they are released by the LolA protein. The polypeptide is Outer-membrane lipoprotein LolB (Escherichia coli O6:H1 (strain CFT073 / ATCC 700928 / UPEC)).